We begin with the raw amino-acid sequence, 353 residues long: DNA integrity scanning protein DisA (353 aa).

The region spanning 6–144 (DKELMNILKI…GGIKYVLRDS (139 aa)) is the DAC domain. ATP-binding positions include glycine 73, leucine 91, and 104-108 (TRHRT).

The protein belongs to the DisA family. Homooctamer. Mg(2+) is required as a cofactor.

The enzyme catalyses 2 ATP = 3',3'-c-di-AMP + 2 diphosphate. Participates in a DNA-damage check-point that is active prior to asymmetric division when DNA is damaged. DisA forms globular foci that rapidly scan along the chromosomes during sporulation, searching for lesions. When a lesion is present, DisA pauses at the lesion site. This triggers a cellular response that culminates in a temporary block in sporulation initiation. In terms of biological role, also has diadenylate cyclase activity, catalyzing the condensation of 2 ATP molecules into cyclic di-AMP (c-di-AMP). c-di-AMP acts as a signaling molecule that couples DNA integrity with progression of sporulation. The rise in c-di-AMP level generated by DisA while scanning the chromosome, operates as a positive signal that advances sporulation; upon encountering a lesion, the DisA focus arrests at the damaged site and halts c-di-AMP synthesis. The protein is DNA integrity scanning protein DisA of Clostridium botulinum (strain Kyoto / Type A2).